A 114-amino-acid chain; its full sequence is UPF0757 protein YmgG (114 aa).

This sequence belongs to the UPF0757 family.

This is UPF0757 protein YmgG from Shigella flexneri.